Here is a 279-residue protein sequence, read N- to C-terminus: uncharacterized protein (279 aa).

A signal peptide spans 1–31; it reads MLVQSRTLVTAILSCSLVFGTTVNGASVAIA.

This is an uncharacterized protein from Corynebacterium glutamicum (strain ATCC 13032 / DSM 20300 / JCM 1318 / BCRC 11384 / CCUG 27702 / LMG 3730 / NBRC 12168 / NCIMB 10025 / NRRL B-2784 / 534).